We begin with the raw amino-acid sequence, 108 residues long: uncharacterized protein (108 aa).

One can recognise an HTH cro/C1-type domain in the interval 20 to 74; sequence VRQRRTALILDQETLARRIGVSFQQIQKYERGRNRISASRLYDIAKALAVPIDYF. Positions 31–50 form a DNA-binding region, H-T-H motif; it reads QETLARRIGVSFQQIQKYER.

This is an uncharacterized protein from Rhodospirillum rubrum.